The sequence spans 393 residues: Major outer membrane porin, serovar E (393 aa).

Residues M1–A22 form the signal peptide.

It belongs to the chlamydial porin (CP) (TC 1.B.2) family. As to quaternary structure, part of a disulfide cross-linked outer membrane complex (COMC) composed of the major outer membrane porin (MOMP), the small cysteine-rich protein (OmcA) and the large cysteine-rich periplasmic protein (OmcB).

The protein resides in the cell outer membrane. Its function is as follows. In elementary bodies (EBs, the infectious stage, which is able to survive outside the host cell) provides the structural integrity of the outer envelope through disulfide cross-links with the small cysteine-rich protein and the large cysteine-rich periplasmic protein. It has been described in publications as the Sarkosyl-insoluble COMC (Chlamydia outer membrane complex), and serves as the functional equivalent of peptidoglycan. Functionally, permits diffusion of specific solutes through the outer membrane. The protein is Major outer membrane porin, serovar E (ompA) of Chlamydia trachomatis.